Reading from the N-terminus, the 256-residue chain is Type III pantothenate kinase (256 aa).

ATP is bound at residue 6–13; sequence DVGNSNIV. Substrate-binding positions include tyrosine 100 and 107 to 110; that span reads GADR. Residue aspartate 109 is the Proton acceptor of the active site. Aspartate 129 contacts K(+). Threonine 132 serves as a coordination point for ATP. Substrate is bound at residue threonine 184.

Belongs to the type III pantothenate kinase family. In terms of assembly, homodimer. NH4(+) serves as cofactor. It depends on K(+) as a cofactor.

It is found in the cytoplasm. It carries out the reaction (R)-pantothenate + ATP = (R)-4'-phosphopantothenate + ADP + H(+). It functions in the pathway cofactor biosynthesis; coenzyme A biosynthesis; CoA from (R)-pantothenate: step 1/5. Functionally, catalyzes the phosphorylation of pantothenate (Pan), the first step in CoA biosynthesis. The sequence is that of Type III pantothenate kinase from Geotalea uraniireducens (strain Rf4) (Geobacter uraniireducens).